A 367-amino-acid chain; its full sequence is Prenyltransferase idtC (367 aa).

The first 22 residues, 1–22 (MTTLAWFAGRSMVLDLAALTSA), serve as a signal peptide directing secretion. Positions 32–42 (TSTPTSTPTST) are enriched in low complexity. Positions 32–84 (TSTPTSTPTSTDKAGTPPGSTIHHYGYPQGSVTKPNNSKTEKENGSPKDSKGN) are disordered. N-linked (GlcNAc...) asparagine glycosylation is present at Asn-67. Basic and acidic residues predominate over residues 70–82 (KTEKENGSPKDSK). Residue His-132 participates in substrate binding. Mg(2+) contacts are provided by Asp-139 and Asp-143. Residue Arg-148 coordinates substrate. A glycan (N-linked (GlcNAc...) asparagine) is linked at Asn-150. 5 residues coordinate substrate: Lys-233, Thr-234, Gln-264, Asn-271, and Lys-281.

The protein belongs to the FPP/GGPP synthase family. Requires Mg(2+) as cofactor.

It participates in secondary metabolite biosynthesis. Prenyltransferase; part of the gene cluster that mediates the biosynthesis of paspalitrems, indole-diterpene (IDT) mycotoxins that are potent tremorgens in mammals. The geranylgeranyl diphosphate (GGPP) synthase idtG is proposed to catalyze the first step in IDT biosynthesis via catalysis of a series of iterative condensations of isopentenyl diphosphate (IPP) with dimethylallyl diphosphate (DMAPP), geranyl diphosphate (GPP), and farnesyl diphosphate (FPP), to form GGPP. Condensation of indole-3-glycerol phosphate with GGPP by the prenyltransferase idtC then forms 3-geranylgeranylindole (3-GGI). Epoxidation of the two terminal alkenes of the geranylgeranyl moiety by the FAD-dependent monooxygenase idtM, and cyclization by the terpene cyclase idtB then leads to the production of paspaline. The cytochrome P450 monooxygenase idtP then catalyzes oxidative elimination of the pendant methyl group at C-12 of paspaline and generates the C-10 ketone to yield 13-desoxypaxilline. The cytochrome P450 monooxygenase idtQ may catalyze the C-13 oxidation of 13-desoxypaxilline to afford paxilline. Considering that both paspalicine and paxilline were detected in C.paspali, idtQ also catalyzes the formation of paspalinine from 13-desoxypaxilline via paspalicine as an intermediate. Finally, the alpha-prenyltransferase idtF prenylates paspalinine at the C-20 or the C-21 positions to yield paspalitrems A and C, respectively. The hydroxylation of paspalitrem A at C-32 by a still unknown oxidase affords paspalitrem B. This chain is Prenyltransferase idtC, found in Claviceps paspali (Rye ergot fungus).